A 446-amino-acid polypeptide reads, in one-letter code: SWI/SNF chromatin-remodeling accessory subunit 1 (446 aa).

Residues 1-53 (MQTQARPPVPQGPRFNHPATPQQVRRPINAPLPGQTAQIQGNRGPQPPKKKKR) form a disordered region. Positions 220 to 297 (YQPMKFKLHP…PQRLHQLLQQ (78 aa)) constitute an SWIB/MDM2 domain.

The protein belongs to the SMARCD family. Component of the multiprotein chromatin-remodeling complexes SWI/SNF: SWI/SNF-A (BAF), SWI/SNF-B (PBAF) and related complexes. The canonical complex contains a catalytic subunit swsn-4, core subunits swsn-1 and swsn-5, and accessory subunits swsn-3, swsn-6, phf-10, dpff-1, swsn-9 and either ham-3/swsn-2.1 or swsn-2.2. May interact with blmp-1. As to expression, broadly expressed in all cell types.

It is found in the nucleus. In terms of biological role, involved in transcriptional activation and repression of select genes by chromatin remodeling (alteration of DNA-nucleosome topology). Component of SWI/SNF chromatin remodeling complexes that carry out key enzymatic activities, changing chromatin structure by altering DNA-histone contacts within a nucleosome in an ATP-dependent manner. Required for the blmp-1-mediated transcriptional activation or repression of several hypodermal genes such as bed-3. Involved in regulating differentiation, migration and axon pathfinding of specific serotonergic neurons (HSNs). Probably regulates vulva development through the let-60/Ras pathway. May be involved in regulation of developmental processes in the embryo driven by the Wnt pathway. Involved in gonadogenesis. This chain is SWI/SNF chromatin-remodeling accessory subunit 1, found in Caenorhabditis elegans.